The chain runs to 183 residues: Inner membrane-spanning protein YciB (183 aa).

The next 5 helical transmembrane spans lie at 22 to 44, 53 to 73, 76 to 96, 121 to 141, and 153 to 173; these read VQAAAITLVLATILQLILVRILF, IVGLSVIIFGILTAYFDDLAF, WKVTIINGLFAAVLLISQYVF, LGWAIFFIICMLINIIISQLF, and GFTGLSLVAVIITGIYLYPYI.

The protein belongs to the YciB family.

It localises to the cell inner membrane. Plays a role in cell envelope biogenesis, maintenance of cell envelope integrity and membrane homeostasis. This Haemophilus ducreyi (strain 35000HP / ATCC 700724) protein is Inner membrane-spanning protein YciB.